We begin with the raw amino-acid sequence, 132 residues long: EF-hand calcium-binding domain-containing protein 10 (132 aa).

2 EF-hand domains span residues 64-99 (MDNS…LGLC) and 120-132 (EMNK…WSMF).

The sequence is that of EF-hand calcium-binding domain-containing protein 10 (Efcab10) from Mus musculus (Mouse).